The chain runs to 762 residues: 5-methyltetrahydropteroyltriglutamate--homocysteine methyltransferase (762 aa).

Residues 17-20 (REWK) and Lys111 contribute to the 5-methyltetrahydropteroyltri-L-glutamate site. L-homocysteine is bound by residues 435 to 437 (IGS) and Glu488. Residues 435–437 (IGS) and Glu488 contribute to the L-methionine site. Residues 519 to 520 (RC) and Trp565 contribute to the 5-methyltetrahydropteroyltri-L-glutamate site. Asp603 contributes to the L-homocysteine binding site. Asp603 is a binding site for L-methionine. Residue Glu609 participates in 5-methyltetrahydropteroyltri-L-glutamate binding. Residues His645, Cys647, and Glu669 each contribute to the Zn(2+) site. Residue His698 is the Proton donor of the active site. Cys730 serves as a coordination point for Zn(2+).

The protein belongs to the vitamin-B12 independent methionine synthase family. Requires Zn(2+) as cofactor.

It catalyses the reaction 5-methyltetrahydropteroyltri-L-glutamate + L-homocysteine = tetrahydropteroyltri-L-glutamate + L-methionine. Its pathway is amino-acid biosynthesis; L-methionine biosynthesis via de novo pathway; L-methionine from L-homocysteine (MetE route): step 1/1. Catalyzes the transfer of a methyl group from 5-methyltetrahydrofolate to homocysteine resulting in methionine formation. This Bacillus anthracis (strain A0248) protein is 5-methyltetrahydropteroyltriglutamate--homocysteine methyltransferase.